Here is a 418-residue protein sequence, read N- to C-terminus: eIF5-mimic protein 2 (418 aa).

Over residues methionine 1–arginine 14 the composition is skewed to polar residues. The disordered stretch occupies residues methionine 1–arginine 25. Positions asparagine 246–glutamate 413 constitute a W2 domain.

This sequence belongs to the BZW family.

Its function is as follows. Translation initiation regulator which may repress repeat-associated non-AUG (RAN) initiated translation probably by acting as a competitive inhibitor of eukaryotic translation initiation factor 5 (EIF5) function. Enhances histone H4 gene transcription but does not seem to bind DNA directly. The sequence is that of eIF5-mimic protein 2 (BZW1) from Gallus gallus (Chicken).